The chain runs to 108 residues: MMIAIGLFLLAGLAEIAGGYLVWLWLRESKPLWYGLAGGLTLIIYGVIPAFQAFPSFGRVYAAYGGVFIILAVLWGWLVDKKTPDLYDWAGAVICLAGVSVMLWAPRG.

A run of 4 helical transmembrane segments spans residues 3–23 (IAIG…YLVW), 31–51 (PLWY…IPAF), 60–80 (VYAA…WLVD), and 86–106 (LYDW…LWAP).

This sequence belongs to the UPF0060 family.

Its subcellular location is the cell membrane. This Bacillus licheniformis (strain ATCC 14580 / DSM 13 / JCM 2505 / CCUG 7422 / NBRC 12200 / NCIMB 9375 / NCTC 10341 / NRRL NRS-1264 / Gibson 46) protein is UPF0060 membrane protein BLi00854/BL03049.